Here is a 245-residue protein sequence, read N- to C-terminus: tRNA pseudouridine synthase A (245 aa).

Aspartate 52 serves as the catalytic Nucleophile. Substrate is bound at residue tyrosine 111.

This sequence belongs to the tRNA pseudouridine synthase TruA family. Homodimer.

It carries out the reaction uridine(38/39/40) in tRNA = pseudouridine(38/39/40) in tRNA. Its function is as follows. Formation of pseudouridine at positions 38, 39 and 40 in the anticodon stem and loop of transfer RNAs. The sequence is that of tRNA pseudouridine synthase A from Rickettsia akari (strain Hartford).